Reading from the N-terminus, the 263-residue chain is Protein TILLER ANGLE CONTROL 1 (263 aa).

An IGT motif motif is present at residues 55 to 61 (GILAIGT). The tract at residues 243–263 (GKKIHPEQLNGRSNAEGPLTA) is disordered.

This sequence belongs to the TAC family. In terms of tissue distribution, highly expressed in leaf sheath pulvinus. Expressed in shoot apical meristem and leaves.

Its function is as follows. Involved in the regulation of leaf growth angle. Promotes horizontal shoot growth. The sequence is that of Protein TILLER ANGLE CONTROL 1 from Zea mays (Maize).